The primary structure comprises 107 residues: Universal stress protein B homolog (107 aa).

2 helical membrane-spanning segments follow: residues 6 to 23 (TILF…ARYF) and 89 to 106 (LFIL…SSFI).

This sequence belongs to the universal stress protein B family.

Its subcellular location is the cell inner membrane. This chain is Universal stress protein B homolog, found in Vibrio atlanticus (strain LGP32) (Vibrio splendidus (strain Mel32)).